The chain runs to 215 residues: Probable transaldolase (215 aa).

The active-site Schiff-base intermediate with substrate is K83.

The protein belongs to the transaldolase family. Type 3B subfamily.

It localises to the cytoplasm. The catalysed reaction is D-sedoheptulose 7-phosphate + D-glyceraldehyde 3-phosphate = D-erythrose 4-phosphate + beta-D-fructose 6-phosphate. It functions in the pathway carbohydrate degradation; pentose phosphate pathway; D-glyceraldehyde 3-phosphate and beta-D-fructose 6-phosphate from D-ribose 5-phosphate and D-xylulose 5-phosphate (non-oxidative stage): step 2/3. Transaldolase is important for the balance of metabolites in the pentose-phosphate pathway. This Bdellovibrio bacteriovorus (strain ATCC 15356 / DSM 50701 / NCIMB 9529 / HD100) protein is Probable transaldolase.